Reading from the N-terminus, the 312-residue chain is MIASIYSFLDYLKMVKSASPHTLRNYCLDLNGLKIFLEERGNLAPSSPLQLATEKRKVSELPFSLFTKEHVRMYIAKLIENGKAKRTIKRCLSSIKSFAHYCVIQKILLENPAETIHGPRLPKELPSPMTYAQVEVLMATPDISKYHGLRDRCLMELFYSSGLRISEIVAVNKQDFDLSTHLIRIRGKGKKERIIPVTSNAIQWIQIYLNHPDRKRLEKDPQAIFLNRFGRRISTRSIDRSFQEYLRRSGLSGHITPHTIRHTIATHWLESGMDLKTIQALLGHSSLETTTVYTQVSVKLKKQTHQEAHPHA.

One can recognise a Core-binding (CB) domain in the interval 1–103; sequence MIASIYSFLD…SIKSFAHYCV (103 aa). The 183-residue stretch at 124 to 306 folds into the Tyr recombinase domain; sequence ELPSPMTYAQ…SVKLKKQTHQ (183 aa). Active-site residues include Arg164, Lys188, His258, Arg261, and His284. Tyr293 (O-(3'-phospho-DNA)-tyrosine intermediate) is an active-site residue.

This sequence belongs to the 'phage' integrase family. XerC subfamily. Forms a cyclic heterotetrameric complex composed of two molecules of XerC and two molecules of XerD.

It localises to the cytoplasm. In terms of biological role, site-specific tyrosine recombinase, which acts by catalyzing the cutting and rejoining of the recombining DNA molecules. The XerC-XerD complex is essential to convert dimers of the bacterial chromosome into monomers to permit their segregation at cell division. It also contributes to the segregational stability of plasmids. The protein is Tyrosine recombinase XerC of Chlamydia pneumoniae (Chlamydophila pneumoniae).